The primary structure comprises 359 residues: Norspermidine sensor (359 aa).

A signal peptide spans 1 to 33; that stretch reads MTNFCNEWVSYSQMIKRFLSLMVLNTVCYQASA.

The protein belongs to the bacterial solute-binding protein PotD/PotF family.

The protein resides in the periplasm. Functionally, acts as a sensor of norspermidine and enhances biofilm formation. When complexed to norspermidine, could interact with the periplasmic portion of MbaA to regulate its enzymatic activity. This Vibrio cholerae serotype O1 (strain ATCC 39315 / El Tor Inaba N16961) protein is Norspermidine sensor (nspS).